The following is a 356-amino-acid chain: Glutamate 5-kinase (356 aa).

Lys6 contacts ATP. Ser46, Asp135, and Asn147 together coordinate substrate. 202 to 208 (TGGMRSK) contacts ATP. Positions 265-342 (KGIIVVDRGA…SEVRKLLNTT (78 aa)) constitute a PUA domain.

Belongs to the glutamate 5-kinase family.

It is found in the cytoplasm. The enzyme catalyses L-glutamate + ATP = L-glutamyl 5-phosphate + ADP. It functions in the pathway amino-acid biosynthesis; L-proline biosynthesis; L-glutamate 5-semialdehyde from L-glutamate: step 1/2. Its function is as follows. Catalyzes the transfer of a phosphate group to glutamate to form L-glutamate 5-phosphate. The protein is Glutamate 5-kinase of Aquifex aeolicus (strain VF5).